Consider the following 485-residue polypeptide: N-succinylglutamate 5-semialdehyde dehydrogenase (485 aa).

220-225 (GSANTG) provides a ligand contact to NAD(+). Residues Glu243 and Cys278 contribute to the active site.

Belongs to the aldehyde dehydrogenase family. AstD subfamily.

It catalyses the reaction N-succinyl-L-glutamate 5-semialdehyde + NAD(+) + H2O = N-succinyl-L-glutamate + NADH + 2 H(+). Its pathway is amino-acid degradation; L-arginine degradation via AST pathway; L-glutamate and succinate from L-arginine: step 4/5. Catalyzes the NAD-dependent reduction of succinylglutamate semialdehyde into succinylglutamate. The chain is N-succinylglutamate 5-semialdehyde dehydrogenase from Vibrio cholerae serotype O1 (strain M66-2).